The primary structure comprises 912 residues: Metabotropic glutamate receptor 4 (912 aa).

The first 32 residues, 1-32 (MPGKSGLGWWWARLPLCLLLSLYGPWMPSSLG), serve as a signal peptide directing secretion. Over 33 to 586 (KPKGHPHMNS…PIIKLEWDSP (554 aa)) the chain is Extracellular. A disulfide bridge links Cys67 with Cys109. A glycan (N-linked (GlcNAc...) asparagine) is linked at Asn98. L-glutamate-binding positions include Ser159, 180 to 182 (AST), and Tyr230. 7 disulfides stabilise this stretch: Cys249-Cys538, Cys372-Cys388, Cys428-Cys435, Cys520-Cys539, Cys524-Cys542, Cys545-Cys557, and Cys560-Cys573. An N-linked (GlcNAc...) asparagine glycan is attached at Asn301. Asp312 provides a ligand contact to L-glutamate. Position 405 (Lys405) interacts with L-glutamate. N-linked (GlcNAc...) asparagine glycans are attached at residues Asn454 and Asn484. N-linked (GlcNAc...) asparagine glycosylation occurs at Asn569. Residues 587-607 (WAVLPLFLAVVGIAATLFVVI) form a helical membrane-spanning segment. The Cytoplasmic segment spans residues 608–624 (TFVRYNDTPIVKASGRE). A helical transmembrane segment spans residues 625 to 645 (LSYVLLAGIFLCYATTFLMIA). Residues 646–653 (EPDLGTCS) lie on the Extracellular side of the membrane. A helical membrane pass occupies residues 654-671 (LRRIFLGLGMSISYAALL). The Cytoplasmic segment spans residues 672–699 (TKTNRIYRIFEQGKRSVSAPRFISPASQ). A helical transmembrane segment spans residues 700–720 (LAITFSLISLQLLGICVWFVV). Topologically, residues 721-751 (DPSHSVVDFQDQRTLDPRFARGVLKCDISDL) are extracellular. Residues 752 to 772 (SLICLLGYSMLLMVTCTVYAI) traverse the membrane as a helical segment. At 773-786 (KTRGVPETFNEAKP) the chain is on the cytoplasmic side. The chain crosses the membrane as a helical span at residues 787 to 807 (IGFTMYTTCIVWLAFIPIFFG). Residues 808–826 (TSQSADKLYIQTTTLTVSV) lie on the Extracellular side of the membrane. Residues 827 to 847 (SLSASVSLGMLYMPKVYIILF) form a helical membrane-spanning segment. Over 848 to 912 (HPEQNVPKRK…TYVTYTNHAI (65 aa)) the chain is Cytoplasmic.

The protein belongs to the G-protein coupled receptor 3 family. As to quaternary structure, interacts with PICK1.

The protein localises to the cell membrane. G-protein coupled receptor for glutamate. Ligand binding causes a conformation change that triggers signaling via guanine nucleotide-binding proteins (G proteins) and modulates the activity of down-stream effectors. Signaling inhibits adenylate cyclase activity. The polypeptide is Metabotropic glutamate receptor 4 (GRM4) (Macaca fascicularis (Crab-eating macaque)).